We begin with the raw amino-acid sequence, 429 residues long: Argininosuccinate lyase (429 aa).

The protein belongs to the lyase 1 family. Argininosuccinate lyase subfamily.

The protein resides in the cytoplasm. The catalysed reaction is 2-(N(omega)-L-arginino)succinate = fumarate + L-arginine. Its pathway is amino-acid biosynthesis; L-arginine biosynthesis; L-arginine from L-ornithine and carbamoyl phosphate: step 3/3. This Pyrobaculum islandicum (strain DSM 4184 / JCM 9189 / GEO3) protein is Argininosuccinate lyase.